A 352-amino-acid chain; its full sequence is Quinolinate synthase (352 aa).

Residues His-55 and Ser-72 each contribute to the iminosuccinate site. Cys-117 contacts [4Fe-4S] cluster. Iminosuccinate-binding positions include 143–145 (YVN) and Ser-160. Position 204 (Cys-204) interacts with [4Fe-4S] cluster. Residues 230–232 (HPE) and Thr-258 contribute to the iminosuccinate site. Cys-303 provides a ligand contact to [4Fe-4S] cluster.

Belongs to the quinolinate synthase family. Type 2 subfamily. [4Fe-4S] cluster serves as cofactor.

It is found in the cytoplasm. The catalysed reaction is iminosuccinate + dihydroxyacetone phosphate = quinolinate + phosphate + 2 H2O + H(+). The protein operates within cofactor biosynthesis; NAD(+) biosynthesis; quinolinate from iminoaspartate: step 1/1. Catalyzes the condensation of iminoaspartate with dihydroxyacetone phosphate to form quinolinate. This Mycobacterium leprae (strain Br4923) protein is Quinolinate synthase.